A 291-amino-acid chain; its full sequence is N-acetylmannosamine kinase (291 aa).

Residues 5–12 (AIDIGGTK) and 132–139 (GVGGGVVC) contribute to the ATP site. Zn(2+)-binding residues include His-156, Cys-166, Cys-168, and Cys-173.

Belongs to the ROK (NagC/XylR) family. NanK subfamily. As to quaternary structure, homodimer.

The catalysed reaction is an N-acyl-D-mannosamine + ATP = an N-acyl-D-mannosamine 6-phosphate + ADP + H(+). Its pathway is amino-sugar metabolism; N-acetylneuraminate degradation; D-fructose 6-phosphate from N-acetylneuraminate: step 2/5. Functionally, catalyzes the phosphorylation of N-acetylmannosamine (ManNAc) to ManNAc-6-P. This is N-acetylmannosamine kinase from Salmonella paratyphi A (strain ATCC 9150 / SARB42).